The following is a 365-amino-acid chain: UDP-N-acetylglucosamine--N-acetylmuramyl-(pentapeptide) pyrophosphoryl-undecaprenol N-acetylglucosamine transferase (365 aa).

UDP-N-acetyl-alpha-D-glucosamine-binding positions include 17–19, Asn-129, Arg-167, Ser-194, Ile-250, 269–274, and Gln-295; these read TGG and ALTVSE.

It belongs to the glycosyltransferase 28 family. MurG subfamily.

It is found in the cell inner membrane. It carries out the reaction di-trans,octa-cis-undecaprenyl diphospho-N-acetyl-alpha-D-muramoyl-L-alanyl-D-glutamyl-meso-2,6-diaminopimeloyl-D-alanyl-D-alanine + UDP-N-acetyl-alpha-D-glucosamine = di-trans,octa-cis-undecaprenyl diphospho-[N-acetyl-alpha-D-glucosaminyl-(1-&gt;4)]-N-acetyl-alpha-D-muramoyl-L-alanyl-D-glutamyl-meso-2,6-diaminopimeloyl-D-alanyl-D-alanine + UDP + H(+). It participates in cell wall biogenesis; peptidoglycan biosynthesis. Cell wall formation. Catalyzes the transfer of a GlcNAc subunit on undecaprenyl-pyrophosphoryl-MurNAc-pentapeptide (lipid intermediate I) to form undecaprenyl-pyrophosphoryl-MurNAc-(pentapeptide)GlcNAc (lipid intermediate II). This Shewanella woodyi (strain ATCC 51908 / MS32) protein is UDP-N-acetylglucosamine--N-acetylmuramyl-(pentapeptide) pyrophosphoryl-undecaprenol N-acetylglucosamine transferase.